The chain runs to 860 residues: Eukaryotic translation initiation factor 3 subunit C (860 aa).

The disordered stretch occupies residues 1–76; the sequence is MSRFFYGNDS…SEESEEEDVV (76 aa). Positions 10 to 51 are enriched in acidic residues; it reads SDSDSSGSDEEELYSDEEVEQSEEESSEEDASSEEESSEDED. The PCI domain maps to 599-773; the sequence is FHMHINLELL…DAIVFRKGVE (175 aa). Residues 812–860 form a disordered region; that stretch reads RDQGAGARGGRGPRGGGQARGGPRLPGGQQRRPGGQQFGGGALGGAIKA. Over residues 817-831 the composition is skewed to gly residues; that stretch reads GARGGRGPRGGGQAR. The segment covering 832–846 has biased composition (low complexity); that stretch reads GGPRLPGGQQRRPGG. Over residues 847-860 the composition is skewed to gly residues; sequence QQFGGGALGGAIKA.

The protein belongs to the eIF-3 subunit C family. As to quaternary structure, component of the eukaryotic translation initiation factor 3 (eIF-3) complex.

It is found in the cytoplasm. Component of the eukaryotic translation initiation factor 3 (eIF-3) complex, which is involved in protein synthesis of a specialized repertoire of mRNAs and, together with other initiation factors, stimulates binding of mRNA and methionyl-tRNAi to the 40S ribosome. The eIF-3 complex specifically targets and initiates translation of a subset of mRNAs involved in cell proliferation. The polypeptide is Eukaryotic translation initiation factor 3 subunit C (nip1) (Emericella nidulans (strain FGSC A4 / ATCC 38163 / CBS 112.46 / NRRL 194 / M139) (Aspergillus nidulans)).